The sequence spans 476 residues: Stromelysin-2 (476 aa).

An N-terminal signal peptide occupies residues 1 to 17 (MEPLAILALLSLPICSA). The propeptide at 18-99 (YPLHGAVTQG…PRCGVPDVGG (82 aa)) is activation peptide. The Cysteine switch signature appears at 90 to 97 (PRCGVPDV). Zn(2+) contacts are provided by C92, H168, D170, H183, H196, and H218. E219 is an active-site residue. Residues H222 and H228 each coordinate Zn(2+). Hemopexin repeat units follow at residues 286–335 (PDKC…WPTL), 336–382 (PSDL…GFPP), 384–432 (VKKI…FPGI), and 433–476 (EPQV…WLLC). An intrachain disulfide couples C289 to C476.

This sequence belongs to the peptidase M10A family. Zn(2+) serves as cofactor. It depends on Ca(2+) as a cofactor. As to expression, expressed in small intestine. Weak levels in heart and lung.

The protein localises to the secreted. Its subcellular location is the extracellular space. It is found in the extracellular matrix. It catalyses the reaction Similar to stromelysin 1, but action on collagen types III, IV and V is weak.. In terms of biological role, can degrade fibronectin, gelatins of type I, III, IV, and V; weakly collagens III, IV, and V. Activates procollagenase. This Mus musculus (Mouse) protein is Stromelysin-2 (Mmp10).